Here is a 664-residue protein sequence, read N- to C-terminus: Probable urea active transporter 1 (664 aa).

The next 16 membrane-spanning stretches (helical) occupy residues 9 to 29 (SVGYGIVVGLGLGFAALMIFV), 56 to 76 (GLVASAVVSSWTWASTLLTSA), 86 to 106 (GAFWYASGACVQILLFTVLAI), 132 to 152 (GVFLVFAYITNILVMAMLLCG), 165 to 185 (TVAVCFLLPVGVIIYTMFGGI), 189 to 209 (FLTDYIHTVIILVILIMFSLA), 252 to 272 (GAIFFIINLAGNFGTVFVDNG), 290 to 310 (ILGGLAWFAIPWLAATTMGLV), 327 to 347 (MSDLEVSEGLVLPYAAIALMG), 353 to 373 (ATLLLVFMAVTSAASAELIAV), 395 to 415 (LLYTGHASLIVFGFAMSGFAT), 428 to 448 (YLLMGVLVCPAVVPATCVMLF), 454 to 474 (IAVTVSPVLGIISSIITWLVV), 496 to 516 (AGNVVGLLSPALYILILSIIF), 555 to 575 (VAALIITAAFIILWPWPMYGT), and 587 to 607 (WVVVGLIWIFFTVFAVGIFPL).

Belongs to the sodium:solute symporter (SSF) (TC 2.A.21) family.

Its subcellular location is the membrane. Functionally, involved in active transport of urea. This is Probable urea active transporter 1 (dur3-1) from Schizosaccharomyces pombe (strain 972 / ATCC 24843) (Fission yeast).